The following is a 243-amino-acid chain: GTP cyclohydrolase 1 type 2 (243 aa).

Residues His63, His64, Asp102, His209, and Glu213 each coordinate a divalent metal cation.

The protein belongs to the GTP cyclohydrolase I type 2/NIF3 family. Homohexamer.

The enzyme catalyses GTP + H2O = 7,8-dihydroneopterin 3'-triphosphate + formate + H(+). Its pathway is cofactor biosynthesis; 7,8-dihydroneopterin triphosphate biosynthesis; 7,8-dihydroneopterin triphosphate from GTP: step 1/1. In terms of biological role, converts GTP to dihydroneopterin triphosphate. This is GTP cyclohydrolase 1 type 2 from Helicobacter pylori (strain J99 / ATCC 700824) (Campylobacter pylori J99).